The chain runs to 247 residues: UDP-2,3-diacylglucosamine hydrolase (247 aa).

Residues Asp-8, His-10, Asp-41, Asn-79, and His-114 each coordinate Mn(2+). Residue 79-80 coordinates substrate; the sequence is NR. The substrate site is built by Asp-122, Ser-160, Asp-171, Gln-174, and His-202. The Mn(2+) site is built by His-202 and His-204.

Belongs to the LpxH family. Mn(2+) serves as cofactor.

Its subcellular location is the cell inner membrane. It catalyses the reaction UDP-2-N,3-O-bis[(3R)-3-hydroxytetradecanoyl]-alpha-D-glucosamine + H2O = 2-N,3-O-bis[(3R)-3-hydroxytetradecanoyl]-alpha-D-glucosaminyl 1-phosphate + UMP + 2 H(+). It participates in glycolipid biosynthesis; lipid IV(A) biosynthesis; lipid IV(A) from (3R)-3-hydroxytetradecanoyl-[acyl-carrier-protein] and UDP-N-acetyl-alpha-D-glucosamine: step 4/6. In terms of biological role, hydrolyzes the pyrophosphate bond of UDP-2,3-diacylglucosamine to yield 2,3-diacylglucosamine 1-phosphate (lipid X) and UMP by catalyzing the attack of water at the alpha-P atom. Involved in the biosynthesis of lipid A, a phosphorylated glycolipid that anchors the lipopolysaccharide to the outer membrane of the cell. The polypeptide is UDP-2,3-diacylglucosamine hydrolase (Xanthomonas campestris pv. campestris (strain 8004)).